The primary structure comprises 275 residues: NH(3)-dependent NAD(+) synthetase (275 aa).

Position 46–53 (G46–S53) interacts with ATP. D52 serves as a coordination point for Mg(2+). Residue R140 participates in deamido-NAD(+) binding. ATP is bound at residue T160. E165 contributes to the Mg(2+) binding site. Positions 173 and 180 each coordinate deamido-NAD(+). Positions 189 and 211 each coordinate ATP. H260–K261 is a deamido-NAD(+) binding site.

This sequence belongs to the NAD synthetase family. Homodimer.

The catalysed reaction is deamido-NAD(+) + NH4(+) + ATP = AMP + diphosphate + NAD(+) + H(+). It functions in the pathway cofactor biosynthesis; NAD(+) biosynthesis; NAD(+) from deamido-NAD(+) (ammonia route): step 1/1. Catalyzes the ATP-dependent amidation of deamido-NAD to form NAD. Uses ammonia as a nitrogen source. The protein is NH(3)-dependent NAD(+) synthetase of Salmonella heidelberg (strain SL476).